Reading from the N-terminus, the 134-residue chain is Postmeiotic segregation increased 2-like protein 5 (134 aa).

The protein belongs to the DNA mismatch repair MutL/HexB family.

In Homo sapiens (Human), this protein is Postmeiotic segregation increased 2-like protein 5 (PMS2P5).